A 627-amino-acid chain; its full sequence is (+)-3-carene synthase 1, chloroplastic (627 aa).

The N-terminal 36 residues, 1–36 (MSVISIVPLASKPCLYKSFISSTHEPKALRRPISTV), are a transit peptide targeting the chloroplast. The Mg(2+) site is built by Asp-378, Asp-382, and Asp-530. Residues 378–382 (DDMYD) carry the DDXXD motif motif.

It belongs to the terpene synthase family. Tpsd subfamily. Mg(2+) serves as cofactor. Mn(2+) is required as a cofactor.

Its subcellular location is the plastid. It is found in the chloroplast. It catalyses the reaction (2E)-geranyl diphosphate = (+)-car-3-ene + diphosphate. The protein operates within terpene metabolism; oleoresin biosynthesis. In terms of biological role, terpene synthase (TPS) involved in the biosynthesis of monoterpene natural products included in conifer oleoresin secretions and volatile emissions; these compounds contribute to biotic and abiotic stress defense against herbivores (e.g. insect attack by white pine weevil P.strobi) and pathogens. Catalyzes the conversion of (2E)-geranyl diphosphate (GPP) to (+)-car-3-ene. In Picea sitchensis (Sitka spruce), this protein is (+)-3-carene synthase 1, chloroplastic.